Consider the following 420-residue polypeptide: DNA repair protein RadA (420 aa).

62-69 is a binding site for ATP; that stretch reads GDPGIGKS. The RadA KNRFG motif signature appears at 218 to 222; it reads KNRFG. The lon-protease-like stretch occupies residues 317–420; sequence DAYLKSAGGV…IQEVLKKVFA (104 aa).

Belongs to the RecA family. RadA subfamily.

Its function is as follows. Plays a role in repairing double-strand DNA breaks, probably involving stabilizing or processing branched DNA or blocked replication forks. Required for efficient transformation with chromosomal (linear) DNA, but not for replicative plasmid DNA. Its increased sensitivity to a DNA damaging agent suggests it may be required for DNA repair. The sequence is that of DNA repair protein RadA from Streptococcus pneumoniae (strain ATCC BAA-255 / R6).